The sequence spans 90 residues: Large ribosomal subunit protein eL33 (90 aa).

Belongs to the eukaryotic ribosomal protein eL33 family.

In Methanopyrus kandleri (strain AV19 / DSM 6324 / JCM 9639 / NBRC 100938), this protein is Large ribosomal subunit protein eL33.